Reading from the N-terminus, the 254-residue chain is Tyrosine-protein phosphatase YwqE (254 aa).

It belongs to the metallo-dependent hydrolases superfamily. CpsB/CapC family. Requires Mn(2+) as cofactor.

The enzyme catalyses O-phospho-L-tyrosyl-[protein] + H2O = L-tyrosyl-[protein] + phosphate. With respect to regulation, inhibited by vanadate and sodium pyrophosphate. Not inhibited by sodium fluoride. Dephosphorylates the phosphotyrosine-containing proteins YwqD, YwqF and Ssb. In Bacillus subtilis (strain 168), this protein is Tyrosine-protein phosphatase YwqE (ywqE).